A 705-amino-acid polypeptide reads, in one-letter code: Endoglucanase (705 aa).

A signal peptide spans 1 to 23 (MKILKNCILLIIFGLLSTQLINA). Residue Asn75 is glycosylated (N-linked (GlcNAc...) asparagine). The Nucleophile role is filled by Asp85. Active-site residues include His390, Asp428, and Glu437. The interval 455–556 (NPSSTSVPTT…TPTETPSSGE (102 aa)) is disordered. Positions 462 to 552 (PTTTPTVTET…TPTVTPTETP (91 aa)) are enriched in low complexity. Residues 463-552 (TTTPTVTETP…TPTVTPTETP (90 aa)) form a pro/Thr repeats ('hinge') (Pro/Thr box) region.

This sequence belongs to the glycosyl hydrolase 9 (cellulase E) family.

It carries out the reaction Endohydrolysis of (1-&gt;4)-beta-D-glucosidic linkages in cellulose, lichenin and cereal beta-D-glucans.. May digest the spore cell wall during germination, to release the enclosed amoeba. The sequence is that of Endoglucanase (celA) from Dictyostelium discoideum (Social amoeba).